We begin with the raw amino-acid sequence, 114 residues long: T cell receptor beta variable 5-8 (114 aa).

An N-terminal signal peptide occupies residues 1–21 (MGPRLLFWALLCLLGTGPVEA). The 93-residue stretch at 22 to 114 (GVTQSPTHLI…SALYLCASSL (93 aa)) folds into the Ig-like domain. A disulfide bridge links Cys-42 with Cys-110. N-linked (GlcNAc...) asparagine glycosylation occurs at Asn-90.

As to quaternary structure, alpha-beta TR is a heterodimer composed of an alpha and beta chain; disulfide-linked. The alpha-beta TR is associated with the transmembrane signaling CD3 coreceptor proteins to form the TR-CD3 (TcR or TCR). The assembly of alpha-beta TR heterodimers with CD3 occurs in the endoplasmic reticulum where a single alpha-beta TR heterodimer associates with one CD3D-CD3E heterodimer, one CD3G-CD3E heterodimer and one CD247 homodimer forming a stable octameric structure. CD3D-CD3E and CD3G-CD3E heterodimers preferentially associate with TR alpha and TR beta chains, respectively. The association of the CD247 homodimer is the last step of TcR assembly in the endoplasmic reticulum and is required for transport to the cell surface.

The protein localises to the cell membrane. V region of the variable domain of T cell receptor (TR) beta chain that participates in the antigen recognition. Alpha-beta T cell receptors are antigen specific receptors which are essential to the immune response and are present on the cell surface of T lymphocytes. Recognize peptide-major histocompatibility (MH) (pMH) complexes that are displayed by antigen presenting cells (APC), a prerequisite for efficient T cell adaptive immunity against pathogens. Binding of alpha-beta TR to pMH complex initiates TR-CD3 clustering on the cell surface and intracellular activation of LCK that phosphorylates the ITAM motifs of CD3G, CD3D, CD3E and CD247 enabling the recruitment of ZAP70. In turn ZAP70 phosphorylates LAT, which recruits numerous signaling molecules to form the LAT signalosome. The LAT signalosome propagates signal branching to three major signaling pathways, the calcium, the mitogen-activated protein kinase (MAPK) kinase and the nuclear factor NF-kappa-B (NF-kB) pathways, leading to the mobilization of transcription factors that are critical for gene expression and essential for T cell growth and differentiation. The T cell repertoire is generated in the thymus, by V-(D)-J rearrangement. This repertoire is then shaped by intrathymic selection events to generate a peripheral T cell pool of self-MH restricted, non-autoaggressive T cells. Post-thymic interaction of alpha-beta TR with the pMH complexes shapes TR structural and functional avidity. In Homo sapiens (Human), this protein is T cell receptor beta variable 5-8.